A 266-amino-acid chain; its full sequence is Signal peptidase I (266 aa).

Over 1–20 (MQTDNTKSNTNKTAKQEWGS) the chain is Cytoplasmic. The chain crosses the membrane as a helical span at residues 21-41 (FVFVICIALLIRILIMEPFTV). Topologically, residues 42-266 (PTGSMKATIL…IFRNLYNTDV (225 aa)) are periplasmic. Catalysis depends on residues Ser-45 and Lys-108.

It belongs to the peptidase S26 family.

The protein localises to the cell inner membrane. It catalyses the reaction Cleavage of hydrophobic, N-terminal signal or leader sequences from secreted and periplasmic proteins.. The polypeptide is Signal peptidase I (lepB) (Rickettsia massiliae (strain Mtu5)).